We begin with the raw amino-acid sequence, 133 residues long: Small ribosomal subunit protein uS11 (133 aa).

Belongs to the universal ribosomal protein uS11 family. As to quaternary structure, part of the 30S ribosomal subunit.

Functionally, located on the platform of the 30S subunit. This Aeropyrum pernix (strain ATCC 700893 / DSM 11879 / JCM 9820 / NBRC 100138 / K1) protein is Small ribosomal subunit protein uS11.